A 196-amino-acid chain; its full sequence is MQNFTVHQGVVATLDRANVDTDQIIPKQFLKRIERTGFGQFLFFDWRFLEDGETENPDFELNRINVKGASILLTRQNFGSGSSREHAVWALDDYGFRAVIAPSFADIFFNNCFKNGVLPIALSEEDVEELFQRAEKGNPYQLTVDLENQVITDGQGFERSFEVDASRRHNMLHGLDDIAQTLLHEDKITAFEEARG.

This sequence belongs to the LeuD family. LeuD type 1 subfamily. Heterodimer of LeuC and LeuD.

It carries out the reaction (2R,3S)-3-isopropylmalate = (2S)-2-isopropylmalate. Its pathway is amino-acid biosynthesis; L-leucine biosynthesis; L-leucine from 3-methyl-2-oxobutanoate: step 2/4. Functionally, catalyzes the isomerization between 2-isopropylmalate and 3-isopropylmalate, via the formation of 2-isopropylmaleate. This Rhodopirellula baltica (strain DSM 10527 / NCIMB 13988 / SH1) protein is 3-isopropylmalate dehydratase small subunit.